The sequence spans 560 residues: Arginine--tRNA ligase (560 aa).

Positions 121-131 (PNIAKPFSMGH) match the 'HIGH' region motif.

It belongs to the class-I aminoacyl-tRNA synthetase family. As to quaternary structure, monomer.

The protein localises to the cytoplasm. It carries out the reaction tRNA(Arg) + L-arginine + ATP = L-arginyl-tRNA(Arg) + AMP + diphosphate. The chain is Arginine--tRNA ligase from Exiguobacterium sp. (strain ATCC BAA-1283 / AT1b).